Here is a 149-residue protein sequence, read N- to C-terminus: Large ribosomal subunit protein bL9 (149 aa).

Belongs to the bacterial ribosomal protein bL9 family.

In terms of biological role, binds to the 23S rRNA. The polypeptide is Large ribosomal subunit protein bL9 (Leptospira interrogans serogroup Icterohaemorrhagiae serovar copenhageni (strain Fiocruz L1-130)).